A 327-amino-acid chain; its full sequence is Ferredoxin--NADP reductase (327 aa).

FAD contacts are provided by threonine 18, aspartate 37, glutamine 45, tyrosine 50, alanine 90, phenylalanine 124, aspartate 283, and serine 324.

Belongs to the ferredoxin--NADP reductase type 2 family. Homodimer. FAD is required as a cofactor.

The catalysed reaction is 2 reduced [2Fe-2S]-[ferredoxin] + NADP(+) + H(+) = 2 oxidized [2Fe-2S]-[ferredoxin] + NADPH. This chain is Ferredoxin--NADP reductase, found in Saccharopolyspora erythraea (strain ATCC 11635 / DSM 40517 / JCM 4748 / NBRC 13426 / NCIMB 8594 / NRRL 2338).